We begin with the raw amino-acid sequence, 2150 residues long: Zinc finger protein sdc-3 (2150 aa).

A dosage compensation domain 1 region spans residues 443-987; the sequence is QEITSPMFAL…DQVENEEPER (545 aa). Disordered stretches follow at residues 874–894, 1261–1373, 1411–1448, and 1491–1670; these read EKEW…EEED, GSVV…GPEV, FETS…GPIN, and EVLQ…SEKL. The segment covering 1267–1293 has biased composition (polar residues); sequence TNQQEENVTSEGPTLQEGSSIPSSSHI. Residues 1321–1333 show a composition bias toward basic residues; sequence KKSGKTTRGRPKK. Over residues 1347–1357 the composition is skewed to basic and acidic residues; that stretch reads GQKEEAAHEPE. Positions 1504–1524 are enriched in basic residues; sequence SSKKRGRRRKKTPPHIAKARK. The sex determination domain stretch occupies residues 1508-1516; it reads RGRRRKKTP. Residues 1585-1598 are compositionally biased toward basic and acidic residues; it reads EDLHETERPGHVGE. A compositionally biased stretch (polar residues) spans 1638-1648; it reads IQSQAGTNASP. 2 C2H2-type zinc fingers span residues 2078 to 2105 and 2117 to 2141; these read HKCV…GKLH and DDCQ…NHHH. Residues 2080–2105 form a dosage compensation domain 2 region; the sequence is CVQCSIRNQSVYFSSYSLLELHGKLH.

In terms of assembly, component of the SDC complex, which consists of sdc-1, sdc-2 and sdc-3. Within the complex, interacts with sdc-1 and sdc-2. Interacts with dpy-21. Post-translationally, sumoylated. Sumoylation is important for assembly of the dosage compensation complex and its robust binding to the X chromosome. Expressed in somatic and in germline tissues in hermaphrodites (XX). In males (XO), only present in embryos younger than the 100-cell stage (at protein level).

The protein localises to the chromosome. The protein resides in the nucleus. Functionally, component of the SDC complex that functions in sex determination and in X chromosome dosage compensation specifically in hermaphrodite (XX) animals. Plays a central role in the recruitment of the condensin I-like dosage compensation complex to the male sex-determining autosomal gene her-1, thereby contributing to its repression and initiating hermaphrodite sexual development. Involved in the recruitment and assembly of the dosage compensation complex and the dosage compensation protein dpy-21 onto the X chromosomes in hermaphrodites, which leads to a reduction of X-linked gene transcription and an equalization of X-linked gene expression between the sexes. In Caenorhabditis elegans, this protein is Zinc finger protein sdc-3 (sdc-3).